The primary structure comprises 605 residues: Replication protein E1 (605 aa).

The short motif at 80–82 is the Nuclear localization signal element; that stretch reads KRK. A phosphoserine; by host mark is found at Ser85 and Ser93. The Nuclear export signal motif lies at 92 to 101; that stretch reads LSPQLESISL. The interval 145–308 is DNA-binding region; it reads QGTKGLGIVK…TLINHQSANA (164 aa). The SF3 helicase domain occupies 407 to 557; that stretch reads INFIEFLTVF…FPLDANHKPQ (151 aa). 433–440 is an ATP binding site; it reads GPPDTGKS. A Glycyl lysine isopeptide (Lys-Gly) (interchain with G-Cter in SUMO) cross-link involves residue Lys514.

Belongs to the papillomaviridae E1 protein family. In terms of assembly, can form hexamers. Interacts with E2 protein; this interaction increases E1 DNA binding specificity. Interacts with host DNA polymerase subunit POLA2. Interacts with host single stranded DNA-binding protein RPA1. Interacts with host TOP1; this interaction stimulates the enzymatic activity of TOP1. Phosphorylated. In terms of processing, sumoylated.

The protein localises to the host nucleus. It carries out the reaction Couples ATP hydrolysis with the unwinding of duplex DNA by translocating in the 3'-5' direction.. The catalysed reaction is ATP + H2O = ADP + phosphate + H(+). In terms of biological role, ATP-dependent DNA 3'-5' helicase required for initiation of viral DNA replication. It forms a complex with the viral E2 protein. The E1-E2 complex binds to the replication origin which contains binding sites for both proteins. During the initial step, a dimer of E1 interacts with a dimer of protein E2 leading to a complex that binds the viral origin of replication with high specificity. Then, a second dimer of E1 displaces the E2 dimer in an ATP-dependent manner to form the E1 tetramer. Following this, two E1 monomers are added to each half of the site, which results in the formation of two E1 trimers on the viral ori. Subsequently, two hexamers will be created. The double hexamer acts as a bi-directional helicase machinery and unwinds the viral DNA and then recruits the host DNA polymerase to start replication. In Homo sapiens (Human), this protein is Replication protein E1.